The sequence spans 63 residues: MIGVIFYNTKGNFLRVKCLDCGNQQVVFDRAASYVQCIICGKTLVEPTGGKSKIKAQILEVLD.

4 residues coordinate Zn(2+): Cys-18, Cys-21, Cys-37, and Cys-40. Residues 18–40 (CLDCGNQQVVFDRAASYVQCIIC) form a C4-type zinc finger.

The protein belongs to the eukaryotic ribosomal protein eS27 family. In terms of assembly, part of the 30S ribosomal subunit. Zn(2+) is required as a cofactor.

The sequence is that of Small ribosomal subunit protein eS27 from Methanothermobacter thermautotrophicus (strain ATCC 29096 / DSM 1053 / JCM 10044 / NBRC 100330 / Delta H) (Methanobacterium thermoautotrophicum).